The primary structure comprises 579 residues: Folliculin (579 aa).

The disordered stretch occupies residues 30 to 81 (PQGDGNEDSPGQGEQAEEEEGGIQMNSRMRAHSPAEGASVESSSPGPKKSDM). Phosphoserine occurs at positions 62 and 73. The 157-residue stretch at 86-242 (RSLAAGHPGY…RNGNAARSLT (157 aa)) folds into the uDENN FLCN/SMCR8-type domain. The tract at residues 210 to 220 (AEQFGCPQRAQ) is essential for interaction with LDHA. The stretch at 287 to 310 (EKLADLEEESESWDNSEAEEEEKA) forms a coiled coil. Over residues 294 to 308 (EESESWDNSEAEEEE) the composition is skewed to acidic residues. A disordered region spans residues 294–337 (EESESWDNSEAEEEEKAPVLPESTEGRELTQGPAESSSLSGCGS). Position 302 is a phosphoserine (serine 302). Residues 326 to 336 (PAESSSLSGCG) are compositionally biased toward polar residues. The 153-residue stretch at 339–491 (QPRKLPVFKS…ILNKIEAALT (153 aa)) folds into the cDENN FLCN/SMCR8-type domain. 3 positions are modified to phosphoserine; by ULK1: serine 406, serine 537, and serine 542. The dDENN FLCN/SMCR8-type domain maps to 493–558 (QNLSVDVVDQ…LLKFWMTGLS (66 aa)). Phosphoserine is present on serine 571.

The protein belongs to the folliculin family. Interacts (via C-terminus) with FNIP1 or FNIP2 (via C-terminus). Component of the lysosomal folliculin complex (LFC), composed of FLCN, FNIP1 (or FNIP2), RagA/RRAGA or RagB/RRAGB GDP-bound, RagC/RRAGC or RagD/RRAGD GTP-bound, and Ragulator. Interaction with FNIP1 or FNIP2 mediates indirect interaction with the PRKAA1, PRKAB1 and PRKAG1 subunits of 5'-AMP-activated protein kinase (AMPK). Interacts with HSP90AA1 in the presence of FNIP1. Interacts with HSP70, STUB1, CDC37, AHSA1, CCT2, STIP1, PTGES3 and PPP5C. Interacts with GABARAP; interaction takes place in the presence of FNIP1 and/or FNIP2. Interacts with RILP; the interaction is direct and promotes association between RILP and RAB34. Interacts with KIF3A and KIF3B. Interacts with lactate dehydrogenase LDHA, but not LDHB; the interaction is direct, may preferentially bind LDHA dimers rather than tetramers, and regulates LDHA activity, acting as an uncompetitive inhibitor. In terms of processing, phosphorylation by ULK1 modulates the interaction with GABARAP and is required to regulate autophagy. As to expression, expressed in most tissues tested, including skin, lung, kidney, heart, testis and stomach.

Its subcellular location is the lysosome membrane. It is found in the cytoplasm. The protein localises to the cytosol. The protein resides in the cell projection. It localises to the cilium. Its subcellular location is the cytoskeleton. It is found in the microtubule organizing center. The protein localises to the centrosome. The protein resides in the spindle. It localises to the nucleus. Its activity is regulated as follows. GTPase-activating activity is inhibited in the folliculin complex (LFC), which stabilizes the GDP-bound state of RagA/RRAGA (or RagB/RRAGB), because Arg-164 is located far from the RagC/RRAGC or RagD/RRAGD nucleotide pocket. Disassembly of the LFC complex upon amino acid restimulation liberates the GTPase-activating activity. Multi-functional protein, involved in both the cellular response to amino acid availability and in the regulation of glycolysis. GTPase-activating protein that plays a key role in the cellular response to amino acid availability through regulation of the non-canonical mTORC1 signaling cascade controlling the MiT/TFE factors TFEB and TFE3. Activates mTORC1 by acting as a GTPase-activating protein: specifically stimulates GTP hydrolysis by RagC/RRAGC or RagD/RRAGD, promoting the conversion to the GDP-bound state of RagC/RRAGC or RagD/RRAGD, and thereby activating the kinase activity of mTORC1. The GTPase-activating activity is inhibited during starvation and activated in presence of nutrients. Acts as a key component for non-canonical mTORC1-dependent control of the MiT/TFE factors TFEB and TFE3, while it is not involved in mTORC1-dependent phosphorylation of canonical RPS6KB1/S6K1 and EIF4EBP1/4E-BP1. In low-amino acid conditions, the lysosomal folliculin complex (LFC) is formed on the membrane of lysosomes, which inhibits the GTPase-activating activity of FLCN, inactivates mTORC1 and maximizes nuclear translocation of TFEB and TFE3. Upon amino acid restimulation, RagA/RRAGA (or RagB/RRAGB) nucleotide exchange promotes disassembly of the LFC complex and liberates the GTPase-activating activity of FLCN, leading to activation of mTORC1 and subsequent cytoplasmic retention of TFEB and TFE3. Indirectly acts as a positive regulator of Wnt signaling by promoting mTOR-dependent cytoplasmic retention of MiT/TFE factor TFE3. Required for the exit of hematopoietic stem cell from pluripotency by promoting mTOR-dependent cytoplasmic retention of TFE3, thereby increasing Wnt signaling. Acts as an inhibitor of browning of adipose tissue by regulating mTOR-dependent cytoplasmic retention of TFE3. Involved in the control of embryonic stem cells differentiation; together with LAMTOR1 it is necessary to recruit and activate RagC/RRAGC and RagD/RRAGD at the lysosomes, and to induce exit of embryonic stem cells from pluripotency via non-canonical, mTOR-independent TFE3 inactivation. In response to flow stress, regulates STK11/LKB1 accumulation and mTORC1 activation through primary cilia: may act by recruiting STK11/LKB1 to primary cilia for activation of AMPK resided at basal bodies, causing mTORC1 down-regulation. Together with FNIP1 and/or FNIP2, regulates autophagy: following phosphorylation by ULK1, interacts with GABARAP and promotes autophagy. Required for starvation-induced perinuclear clustering of lysosomes by promoting association of RILP with its effector RAB34. Regulates glycolysis by binding to lactate dehydrogenase LDHA, acting as an uncompetitive inhibitor. The sequence is that of Folliculin from Homo sapiens (Human).